The chain runs to 168 residues: RNA pyrophosphohydrolase (168 aa).

Residues 8-160 (PYRPCVGLAI…KRQVYERVAR (153 aa)) enclose the Nudix hydrolase domain. The Nudix box motif lies at 47–68 (GGIDKGEEPYEAALRELYEETS).

This sequence belongs to the Nudix hydrolase family. RppH subfamily. A divalent metal cation serves as cofactor.

Its function is as follows. Accelerates the degradation of transcripts by removing pyrophosphate from the 5'-end of triphosphorylated RNA, leading to a more labile monophosphorylated state that can stimulate subsequent ribonuclease cleavage. The chain is RNA pyrophosphohydrolase from Azorhizobium caulinodans (strain ATCC 43989 / DSM 5975 / JCM 20966 / LMG 6465 / NBRC 14845 / NCIMB 13405 / ORS 571).